The chain runs to 341 residues: 1-aminocyclopropane-1-carboxylate deaminase (341 aa).

Ser-1 carries the post-translational modification N-acetylserine. An N6-(pyridoxal phosphate)lysine modification is found at Lys-51. Residue Ser-78 is the Nucleophile of the active site.

This sequence belongs to the ACC deaminase/D-cysteine desulfhydrase family. In terms of assembly, homodimer. Pyridoxal 5'-phosphate serves as cofactor.

The catalysed reaction is 1-aminocyclopropane-1-carboxylate + H2O = 2-oxobutanoate + NH4(+). Its function is as follows. Catalyzes a cyclopropane ring-opening reaction, the irreversible conversion of 1-aminocyclopropane-1-carboxylate (ACC) to ammonia and alpha-ketobutyrate. The sequence is that of 1-aminocyclopropane-1-carboxylate deaminase from Cyberlindnera saturnus (Yeast).